The primary structure comprises 301 residues: 2-dehydropantoate 2-reductase (301 aa).

Residues Gly7–Gly12, Lys74, Asn99, and Ala123 each bind NADP(+). The Proton donor role is filled by Lys179. Residues Lys179, Asn183, Asn187, Asn197, and Asn246–Ser249 contribute to the substrate site. Glu261 is an NADP(+) binding site.

This sequence belongs to the ketopantoate reductase family.

It is found in the cytoplasm. The enzyme catalyses (R)-pantoate + NAD(+) = 2-dehydropantoate + NADH + H(+). It carries out the reaction (R)-pantoate + NADP(+) = 2-dehydropantoate + NADPH + H(+). Its pathway is cofactor biosynthesis; coenzyme A biosynthesis. Catalyzes the NAD(P)H-dependent reduction of ketopantoate into pantoic acid. The polypeptide is 2-dehydropantoate 2-reductase (Pyrococcus horikoshii (strain ATCC 700860 / DSM 12428 / JCM 9974 / NBRC 100139 / OT-3)).